A 508-amino-acid polypeptide reads, in one-letter code: uncharacterized protein (508 aa).

Residues 7–29 (ALAIVLALILSLALPELLFQLYP) traverse the membrane as a helical segment.

The protein localises to the membrane. This is an uncharacterized protein from Archaeoglobus fulgidus (strain ATCC 49558 / DSM 4304 / JCM 9628 / NBRC 100126 / VC-16).